A 265-amino-acid polypeptide reads, in one-letter code: Apolipoprotein A-I (265 aa).

Positions 1–16 (MKAAVLIWLFLMGSQA) are cleaved as a signal peptide. Tandem repeats lie at residues 66-87 (LKLL…EQLG) and 88-109 (PVTQ…QEMS). The interval 66–265 (LKLLDNWDSL…EEYTKKLSSQ (200 aa)) is 10 X approximate tandem repeats. Met-108 is subject to Methionine sulfoxide. The 3; half-length repeat unit spans residues 110–120 (KDLEEVKAQVQ). Repeat copies occupy residues 121–142 (PYLD…QKLE), 143–164 (PLRT…EKLS), 165–186 (PLAE…TQLA), 187–208 (PYSD…ENSG), and 209–230 (ASLA…EKAK). Position 134 is a methionine sulfoxide (Met-134). The 9; half-length repeat unit spans residues 231–241 (PALDDLRQGLL). Repeat unit 10 spans residues 242–265 (PVLESFKVSFLSALEEYTKKLSSQ).

Belongs to the apolipoprotein A1/A4/E family. In terms of assembly, homodimer. Interacts with APOA1BP and CLU. Component of a sperm activating protein complex (SPAP), consisting of APOA1, an immunoglobulin heavy chain, an immunoglobulin light chain and albumin. Interacts with NDRG1. Interacts with SCGB3A2. Interacts with NAXE and YJEFN3. In terms of processing, glycosylated. Post-translationally, palmitoylated. Phosphorylation sites are present in the extracellular medium.

It is found in the secreted. In terms of biological role, participates in the reverse transport of cholesterol from tissues to the liver for excretion by promoting cholesterol efflux from tissues and by acting as a cofactor for the lecithin cholesterol acyltransferase (LCAT). As part of the SPAP complex, activates spermatozoa motility. This Aotus nancymaae (Ma's night monkey) protein is Apolipoprotein A-I (APOA1).